A 174-amino-acid polypeptide reads, in one-letter code: Interleukin-10 (174 aa).

Residues 1–16 (MPTWMLLFCLLCVTSS) form the signal peptide. N17 is a glycosylation site (N-linked (GlcNAc...) asparagine). 2 cysteine pairs are disulfide-bonded: C26–C122 and C76–C128.

This sequence belongs to the IL-10 family. As to quaternary structure, homodimer. Interacts with IL10RA and IL10RB.

It is found in the secreted. Functionally, major immune regulatory cytokine that acts on many cells of the immune system where it has profound anti-inflammatory functions, limiting excessive tissue disruption caused by inflammation. Mechanistically, IL10 binds to its heterotetrameric receptor comprising IL10RA and IL10RB leading to JAK1 and STAT2-mediated phosphorylation of STAT3. In turn, STAT3 translocates to the nucleus where it drives expression of anti-inflammatory mediators. Targets antigen-presenting cells (APCs) such as macrophages and monocytes and inhibits their release of pro-inflammatory cytokines including granulocyte-macrophage colony-stimulating factor /GM-CSF, granulocyte colony-stimulating factor/G-CSF, IL-1 alpha, IL-1 beta, IL-6, IL-8 and TNF-alpha. Also interferes with antigen presentation by reducing the expression of MHC-class II and co-stimulatory molecules, thereby inhibiting their ability to induce T cell activation. In addition, controls the inflammatory response of macrophages by reprogramming essential metabolic pathways including mTOR signaling. The protein is Interleukin-10 (IL10) of Trichosurus vulpecula (Brush-tailed possum).